The chain runs to 184 residues: UPF0302 protein OB1778 (184 aa).

It belongs to the UPF0302 family.

This Oceanobacillus iheyensis (strain DSM 14371 / CIP 107618 / JCM 11309 / KCTC 3954 / HTE831) protein is UPF0302 protein OB1778.